The primary structure comprises 425 residues: MTRKHILSFALMTALGMTVTSTAFAQLHLEIAKAPEQAPKIAIVPFGNDQSIFPIVENDLNRSGRFSSASKNLPTTASIDAIQASAWQAAGIPYVVVGNLKPAANNAFEVHYQLYDVQKQQYLLNEVLTVPASRVRQAAHMISDAIYQALTGIAGDFSGRIAYVLRNPATPDQRYTLQIADTDGEQPKTVLSSRDPILSPAWTPDAKKIAYVSFETKRPAIYLQDLATGQREVLASFKGLNGAPSFSPDGKSMLFTASMNGNPEIYQMDLSTRQLQRMTNDNAIDTEARYAPDGKSFIFTSDRGGSPQIYRYSFDDSSTKRLTFRGAFNARGTLSADGKNIALVHRPSGSNYKVAIMNISTGIVNILTPTSLDESPSFSPNGQMVVYATYEGSRGLLSIMSTDGRFRMNLPSEQGEVREPAWAPK.

An N-terminal signal peptide occupies residues 1–25; that stretch reads MTRKHILSFALMTALGMTVTSTAFA.

This sequence belongs to the TolB family. In terms of assembly, the Tol-Pal system is composed of five core proteins: the inner membrane proteins TolA, TolQ and TolR, the periplasmic protein TolB and the outer membrane protein Pal. They form a network linking the inner and outer membranes and the peptidoglycan layer.

It localises to the periplasm. Its function is as follows. Part of the Tol-Pal system, which plays a role in outer membrane invagination during cell division and is important for maintaining outer membrane integrity. The protein is Tol-Pal system protein TolB of Acinetobacter baylyi (strain ATCC 33305 / BD413 / ADP1).